The following is a 315-amino-acid chain: Zinc transport protein ZntB (315 aa).

At 1 to 250 (MGFMIEHWDF…RDEKTNKNSY (250 aa)) the chain is on the cytoplasmic side. Residues 251-271 (LFTLVATIFLPTSFLTGLLGI) traverse the membrane as a helical segment. At 272–282 (NIGGMPGVESS) the chain is on the periplasmic side. Residues 283–303 (MAFTWFCIALIVIFGLEWLLF) form a helical membrane-spanning segment. The Cytoplasmic segment spans residues 304 to 315 (KRLGFTNKTDDE).

It belongs to the CorA metal ion transporter (MIT) (TC 1.A.35) family. Homopentamer. Can assemble pentamers in the absence of the transmembrane regions.

Its subcellular location is the cell inner membrane. It catalyses the reaction Zn(2+)(out) + H(+)(out) = Zn(2+)(in) + H(+)(in). Zinc transporter. Acts as a Zn(2+):proton symporter, which likely mediates zinc ion uptake. The chain is Zinc transport protein ZntB from Vibrio parahaemolyticus serotype O3:K6 (strain RIMD 2210633).